Reading from the N-terminus, the 414-residue chain is Serine hydroxymethyltransferase (414 aa).

(6S)-5,6,7,8-tetrahydrofolate contacts are provided by residues L116 and 120–122 (GHL). K224 bears the N6-(pyridoxal phosphate)lysine mark. (6S)-5,6,7,8-tetrahydrofolate contacts are provided by residues E240 and 348 to 350 (SPF).

Belongs to the SHMT family. As to quaternary structure, homodimer. Pyridoxal 5'-phosphate serves as cofactor.

The protein resides in the cytoplasm. The catalysed reaction is (6R)-5,10-methylene-5,6,7,8-tetrahydrofolate + glycine + H2O = (6S)-5,6,7,8-tetrahydrofolate + L-serine. Its pathway is one-carbon metabolism; tetrahydrofolate interconversion. It functions in the pathway amino-acid biosynthesis; glycine biosynthesis; glycine from L-serine: step 1/1. Functionally, catalyzes the reversible interconversion of serine and glycine with tetrahydrofolate (THF) serving as the one-carbon carrier. This reaction serves as the major source of one-carbon groups required for the biosynthesis of purines, thymidylate, methionine, and other important biomolecules. Also exhibits THF-independent aldolase activity toward beta-hydroxyamino acids, producing glycine and aldehydes, via a retro-aldol mechanism. This chain is Serine hydroxymethyltransferase, found in Campylobacter jejuni subsp. jejuni serotype O:2 (strain ATCC 700819 / NCTC 11168).